The following is a 1523-amino-acid chain: ATP-binding cassette sub-family C member 3 (1523 aa).

Over 1 to 35 (MDRLCGSGELGSKFWDSNLSIYTNTPDLTPCFQNS) the chain is Extracellular. A glycan (N-linked (GlcNAc...) asparagine) is linked at N18. Residues 36–56 (LLAWVPCIYLWAALPCYLFYL) traverse the membrane as a helical segment. At 57–75 (RHHQLGYIVLSWLSRLKTA) the chain is on the cytoplasmic side. A helical membrane pass occupies residues 76–96 (LGVLLWCVSWVDLFYSFHGLI). The Extracellular segment spans residues 97–102 (HGSSPA). The chain crosses the membrane as a helical span at residues 103-123 (PVFFVTPLVVGITMLLATLLI). Residues 124-129 (QYERLR) are Cytoplasmic-facing. Residues 130–150 (GVQSSGVLIIFWLLCVICAII) form a helical membrane-spanning segment. The Extracellular segment spans residues 151–170 (PFRSKILSALAEGKILDPFR). The chain crosses the membrane as a helical span at residues 171–191 (FTTFYIYFALVFCALILSCFK). The Cytoplasmic segment spans residues 192-301 (EKPPLFSPEN…KSKQPSFLRA (110 aa)). The helical transmembrane segment at 302–324 (LVRTFTSSLLMSACFNLIQNLLG) threads the bilayer. Residues 310–593 (LLMSACFNLI…LPQLISGLTQ (284 aa)) form the ABC transmembrane type-1 1 domain. Over 325–345 (FVNPQLLSILIRFISDPTAPT) the chain is Extracellular. Residues 346–366 (WWGFLLAGLMFLSSTMQTLIL) form a helical membrane-spanning segment. Residues 367–419 (HQYYHCIFVMALRLRTAIIGVIYRKALVITNSVKRESTVGEMVNLMSVDAQRF) are Cytoplasmic-facing. Residues 420-440 (MDVSPFINLLWSAPLQVILAI) traverse the membrane as a helical segment. Position 441 (Y441) is a topological domain, extracellular. A helical membrane pass occupies residues 442-462 (FLWQILGPSALAGVAVIVLLI). Over 463 to 535 (PLNGAVSMKM…KGAYLQAIST (73 aa)) the chain is Cytoplasmic. The chain crosses the membrane as a helical span at residues 536 to 556 (FIWICTPFLVTLITLGVYVYV). Over 557 to 567 (DESNVLDAEKA) the chain is Extracellular. The chain crosses the membrane as a helical span at residues 568–588 (FVSLSLFNILKIPLNMLPQLI). At 589 to 967 (SGLTQASVSL…YAKSMGLCTT (379 aa)) the chain is on the cytoplasmic side. One can recognise an ABC transporter 1 domain in the interval 626–850 (ITIHNGTFTW…DGSFANFLRN (225 aa)). 660 to 667 (GPVGCGKS) is an ATP binding site. Phosphoserine occurs at positions 903 and 906. Residues 903-915 (SSLSSEGEVQNRT) show a composition bias toward polar residues. Residues 903 to 923 (SSLSSEGEVQNRTMPKKHTNS) are disordered. Positions 967-1248 (TLSICLLYGG…MIRMISDLES (282 aa)) constitute an ABC transmembrane type-1 2 domain. The chain crosses the membrane as a helical span at residues 968 to 988 (LSICLLYGGQSAAAIGANVWL). At 989 to 1013 (SAWSNDAEEHGQQNKTSVRLGVYAA) the chain is on the extracellular side. N1002 carries N-linked (GlcNAc...) asparagine glycosylation. Residues 1014 to 1034 (LGILQGLLVMLSAFTMVVGAI) form a helical membrane-spanning segment. Over 1035–1071 (QAARLLHEALLHNKIRSPQSFFDTTPSGRILNRFSKD) the chain is Cytoplasmic. The chain crosses the membrane as a helical span at residues 1072-1092 (IYVIDEVLAPTILMLLNSFFT). Residues 1093 to 1096 (SIST) are Extracellular-facing. The helical transmembrane segment at 1097–1117 (IMVIVASTPLFMVVVLPLAVL) threads the bilayer. Topologically, residues 1118–1191 (YGFVQRFYVA…YPYIASNRWL (74 aa)) are cytoplasmic. A helical transmembrane segment spans residues 1192–1212 (GVHVEFVGNCVVLFAALFAVI). At 1213–1219 (GRNSLNP) the chain is on the extracellular side. The chain crosses the membrane as a helical span at residues 1220-1240 (GLVGLSVSYALQVTMALNWMI). The Cytoplasmic segment spans residues 1241 to 1523 (RMISDLESNI…YGMAKDAGLA (283 aa)). In terms of domain architecture, ABC transporter 2 spans 1287–1519 (FRNYSVRYRP…GGIFYGMAKD (233 aa)). 1319–1326 (GRTGAGKS) is a binding site for ATP.

This sequence belongs to the ABC transporter superfamily. ABCC family. Conjugate transporter (TC 3.A.1.208) subfamily. Detected throughout the gastrointestinal tract, liver, lung, pancreas, bladder, gall bladder and at low levels in the adrenal gland.

Its subcellular location is the basolateral cell membrane. The protein localises to the basal cell membrane. It carries out the reaction an S-substituted glutathione(in) + ATP + H2O = an S-substituted glutathione(out) + ADP + phosphate + H(+). It catalyses the reaction ATP + H2O + xenobioticSide 1 = ADP + phosphate + xenobioticSide 2.. The enzyme catalyses 17beta-estradiol 17-O-(beta-D-glucuronate)(in) + ATP + H2O = 17beta-estradiol 17-O-(beta-D-glucuronate)(out) + ADP + phosphate + H(+). The catalysed reaction is dehydroepiandrosterone 3-sulfate(in) + ATP + H2O = dehydroepiandrosterone 3-sulfate(out) + ADP + phosphate + H(+). It carries out the reaction leukotriene C4(in) + ATP + H2O = leukotriene C4(out) + ADP + phosphate + H(+). It catalyses the reaction taurocholate(in) + ATP + H2O = taurocholate(out) + ADP + phosphate + H(+). The enzyme catalyses glycocholate(in) + ATP + H2O = glycocholate(out) + ADP + phosphate + H(+). The catalysed reaction is taurolithocholate 3-sulfate(in) + ATP + H2O = taurolithocholate 3-sulfate(out) + ADP + phosphate + H(+). It carries out the reaction taurochenodeoxycholate 3-sulfate(in) + ATP + H2O = taurochenodeoxycholate 3-sulfate(out) + ADP + phosphate + H(+). It catalyses the reaction (4Z,15Z)-bilirubin IXalpha C8-beta-D-glucuronoside(in) + ATP + H2O = (4Z,15Z)-bilirubin IXalpha C8-beta-D-glucuronoside(out) + ADP + phosphate + H(+). The enzyme catalyses (4Z,15Z)-bilirubin IXalpha C8,C12-beta-D-bisglucuronoside(in) + ATP + H2O = (4Z,15Z)-bilirubin IXalpha C8,C12-beta-D-bisglucuronoside(out) + ADP + phosphate + H(+). Functionally, ATP-dependent transporter of the ATP-binding cassette (ABC) family that binds and hydrolyzes ATP to enable active transport of various substrates including many drugs, toxicants and endogenous compound across cell membranes. Transports glucuronide conjugates such as bilirubin diglucuronide, estradiol-17-beta-o-glucuronide and GSH conjugates such as leukotriene C4 (LTC4). Transports also various bile salts (taurocholate, glycocholate, taurochenodeoxycholate-3-sulfate, taurolithocholate- 3-sulfate). Does not contribute substantially to bile salt physiology but provides an alternative route for the export of bile acids and glucuronides from cholestatic hepatocytes. May contribute to regulate the transport of organic compounds in testes across the blood-testis-barrier. The protein is ATP-binding cassette sub-family C member 3 (Abcc3) of Mus musculus (Mouse).